Consider the following 394-residue polypeptide: Tryptophan synthase beta chain (394 aa).

Lys90 carries the N6-(pyridoxal phosphate)lysine modification.

The protein belongs to the TrpB family. Tetramer of two alpha and two beta chains. The cofactor is pyridoxal 5'-phosphate.

The enzyme catalyses (1S,2R)-1-C-(indol-3-yl)glycerol 3-phosphate + L-serine = D-glyceraldehyde 3-phosphate + L-tryptophan + H2O. It functions in the pathway amino-acid biosynthesis; L-tryptophan biosynthesis; L-tryptophan from chorismate: step 5/5. Functionally, the beta subunit is responsible for the synthesis of L-tryptophan from indole and L-serine. The sequence is that of Tryptophan synthase beta chain from Bacteroides thetaiotaomicron (strain ATCC 29148 / DSM 2079 / JCM 5827 / CCUG 10774 / NCTC 10582 / VPI-5482 / E50).